The primary structure comprises 414 residues: Mini-circle putative transposase for IS117 (414 aa).

In Streptomyces coelicolor (strain ATCC BAA-471 / A3(2) / M145), this protein is Mini-circle putative transposase for IS117.